The sequence spans 100 residues: Urease subunit gamma (100 aa).

This sequence belongs to the urease gamma subunit family. In terms of assembly, heterotrimer of UreA (gamma), UreB (beta) and UreC (alpha) subunits. Three heterotrimers associate to form the active enzyme.

It is found in the cytoplasm. The catalysed reaction is urea + 2 H2O + H(+) = hydrogencarbonate + 2 NH4(+). It functions in the pathway nitrogen metabolism; urea degradation; CO(2) and NH(3) from urea (urease route): step 1/1. In Prochlorococcus marinus (strain NATL1A), this protein is Urease subunit gamma.